A 783-amino-acid polypeptide reads, in one-letter code: Transcription factor E4F1 (783 aa).

The tract at residues 40-84 (GFLGLPAPFSEEDEDDVHRCGRCQVEFTALEDFVQHKIQKTCHRA) is required for ubiquitin ligase activity. A Phosphoserine modification is found at S49. The segment at 185–264 (LLVNKEGRYV…GKSFRESGAL (80 aa)) is mediates dimerization, DNA-binding, transcription repression of CCNA2 and interaction with HMGA2. C2H2-type zinc fingers lie at residues 193 to 215 (YVCMLCHKTFKTGSILKAHMVTH) and 221 to 243 (HECKLCGASFRTKGSLIRHHRRH). The segment at 249 to 273 (YKCAKCGKSFRESGALTRHLKSLTP) adopts a C2H2-type 3; degenerate zinc-finger fold. The interval 368-565 (NLLHQAMQNS…REKGSLVRHV (198 aa)) is mediates interaction with CDKN2A. Residues 386-407 (GEESALEPAPPSGSSPQCLGDG) form a disordered region. 5 consecutive C2H2-type zinc fingers follow at residues 434–456 (HPCPQCSETFPTAATLEAHKRGH), 462–484 (FTCTQCGKAFPKAYLLKKHQEVH), 490–512 (FRCGDCGKLYKTIAHVRGHRRVH), 518–540 (FPCPQCGKRYKTKNAQQVHFRTH), and 546–568 (HVCQFCSRGFREKGSLVRHVRHH). An interaction with BMI1 region spans residues 434–598 (HPCPQCSETF…LNRHLRTKGG (165 aa)). Residues 520–579 (CPQCGKRYKTKNAQQVHFRTHLEEKPHVCQFCSRGFREKGSLVRHVRHHTGEKPFKCYKC) form a mediates interaction with TP53 region. The segment at 574–596 (FKCYKCGRGFAEHGTLNRHLRTK) adopts a C2H2-type 9; degenerate zinc-finger fold. The tract at residues 574 to 596 (FKCYKCGRGFAEHGTLNRHLRTK) is mediates interaction with RASSF1.

In terms of assembly, homodimer; binds DNA as a dimer. Forms a complex with CDKN2A and TP53. Interacts with HDAC1, HMGA2 and RASSF1. Interactions with TP53, RB1, ANP32A and probably BMI1 and FHL2 regulate E4F1 activity. Phosphorylated; phosphorylation is cell cycle-dependent and regulates DNA-binding activity and function. In terms of processing, may be sumoylated by UBE2I upon interaction with CDKN2A. As to expression, ubiquitously expressed.

It is found in the nucleus. It localises to the nucleoplasm. Its subcellular location is the cytoplasm. The catalysed reaction is S-ubiquitinyl-[E2 ubiquitin-conjugating enzyme]-L-cysteine + [acceptor protein]-L-lysine = [E2 ubiquitin-conjugating enzyme]-L-cysteine + N(6)-ubiquitinyl-[acceptor protein]-L-lysine.. It functions in the pathway protein modification; protein ubiquitination. May function as a transcriptional repressor. May also function as a ubiquitin ligase mediating ubiquitination of chromatin-associated TP53. Functions in cell survival and proliferation through control of the cell cycle. Functions in the p53 and pRB tumor suppressor pathways and regulates the cyclin CCNA2 transcription. The sequence is that of Transcription factor E4F1 (E4f1) from Mus musculus (Mouse).